Reading from the N-terminus, the 409-residue chain is Serine/threonine transporter SstT (409 aa).

9 helical membrane-spanning segments follow: residues 24–44 (LALG…AGLF), 48–68 (FVGA…AATI), 82–102 (IIVL…IAGM), 142–162 (AIAN…GAAL), 194–214 (LGIF…ALAG), 218–238 (LLAV…PAIV), 292–312 (IPLG…VLAM), 319–339 (GIQV…VSAC), and 365–385 (VAMQ…SAET).

This sequence belongs to the dicarboxylate/amino acid:cation symporter (DAACS) (TC 2.A.23) family.

The protein resides in the cell inner membrane. It catalyses the reaction L-serine(in) + Na(+)(in) = L-serine(out) + Na(+)(out). It carries out the reaction L-threonine(in) + Na(+)(in) = L-threonine(out) + Na(+)(out). Functionally, involved in the import of serine and threonine into the cell, with the concomitant import of sodium (symport system). The chain is Serine/threonine transporter SstT from Neisseria meningitidis serogroup C (strain 053442).